Consider the following 701-residue polypeptide: Arachidonate 12-lipoxygenase, 12R-type (701 aa).

In terms of domain architecture, PLAT spans 2-119 (ATYKVKVATG…TLSLREATGK (118 aa)). The region spanning 120-701 (TTADDTLPIL…PVLIENSISI (582 aa)) is the Lipoxygenase domain. The Fe cation site is built by His-398, His-403, His-578, Asn-582, and Ile-701.

This sequence belongs to the lipoxygenase family. It depends on Fe cation as a cofactor.

It is found in the cytoplasm. Its subcellular location is the perinuclear region. The enzyme catalyses (5Z,8Z,11Z,14Z)-eicosatetraenoate + O2 = (12R)-hydroperoxy-(5Z,8Z,10E,14Z)-eicosatetraenoate. It carries out the reaction N-[omega-(9Z,12Z)-octadecadienoyloxy]acyl-beta-D-glucosyl-(1&lt;-&gt;1)-octadecasphing-4E-enine + O2 = N-[omega-(9R)-hydroperoxy-(10E,12Z)-octadecadienoyloxy]acyl-beta-D-glucosyl-(1&lt;-&gt;1)-octadecasphing-4E-enine. It catalyses the reaction a N-[omega-(9Z,12Z)-octadecadienoyloxy]-acylsphin-4E-enine + O2 = a N-[omega-(9R)-hydroperoxy-(10E,12Z)-octadecadienoyloxy]-acylsphin-4E-enine. The catalysed reaction is (6Z,9Z,12Z)-octadecatrienoate + O2 = 10-hydroperoxy-(6Z,8E,12Z)-octadecatrienoate. The enzyme catalyses (4Z,7Z,10Z,13Z,16Z,19Z)-docosahexaenoate + O2 = 14-hydroperoxy-(4Z,7Z,10Z,12E,16Z,19Z)-docosahexaenoate. It carries out the reaction (8Z,11Z,14Z)-eicosatrienoate + O2 = (8Z,10E,14Z)-12-hydroperoxyeicosatrienoate. It catalyses the reaction (5Z,8Z,11Z,14Z,17Z)-eicosapentaenoate + O2 = (5Z,7Z,8Z,10E,14Z,17Z)-12-hydroperoxyeicosapentaenoate. The catalysed reaction is (6Z,9Z,12Z)-octadecatrienoate + O2 = 10R-hydroperoxy-(6Z,8E,12Z)-octadecatrienoate. The enzyme catalyses 1-O-methyl-(5Z,8Z,11Z,14Z)-eicosatetraenoate + O2 = 1-O-methyl (5Z,8Z,10E,12R,14Z)-hydroperoxyiecosatetraenoate. It carries out the reaction 1-O-methyl-(5Z,8Z,11Z,14Z)-eicosatetraenoate + O2 = 1-O-methyl-8-hydroperoxy-(5Z,9E,11Z,14Z)-eicosatetraenoate. It catalyses the reaction 1-O-methyl-(5Z,8Z,11Z,14Z)-eicosatetraenoate + O2 = 1-O-methyl-(8R)-hydroperoxy-(5Z,9E,11Z,14Z)-eicosatrienoate. The catalysed reaction is 1-O-methyl-(9Z,12Z)-octadecadienoate + O2 = 1-O-methyl-(9R)-hydroperoxy-(10E,12Z)-octadecadienoate. The enzyme catalyses 1-O-methyl-20-hydroxy-(5Z,8Z,11Z,14Z)-eicosatetraenoate + O2 = 1-O-methyl-8-hydroperoxy-20-hydroxy-(5Z,9E,11Z,14Z)-eicosatetraenoate. It carries out the reaction 1-O-methyl-20-hydroxy-(5Z,8Z,11Z,14Z)-eicosatetraenoate + O2 = 1-O-methyl-12-hydroperoxy-20-hydroxy-(5Z,8Z,10E,14Z)-eicosatetraenoate. It catalyses the reaction 1-O-methyl-20-hydroxy-(5Z,8Z,11Z,14Z)-eicosatetraenoate + O2 = 1-O-methyl-9-hydroperoxy-20-hydroxy-(5Z,7E,11Z,14Z)-eicosatetraenoate. The catalysed reaction is 1-O-methyl-(9Z,12Z)-octadecadienoate + O2 = 1-O-methyl-(13S)-hydroperoxy-(9Z,11E)-octadecadienoate. The protein operates within lipid metabolism; hydroperoxy eicosatetraenoic acid biosynthesis. It participates in lipid metabolism; sphingolipid metabolism. Increased by calcium. Catalyzes the regio and stereo-specific incorporation of a single molecule of dioxygen into free and esterified polyunsaturated fatty acids generating lipid hydroperoxides that can be further reduced to the corresponding hydroxy species. In the skin, acts upstream of ALOXE3 on the lineolate moiety of esterified omega-hydroxyacyl-sphingosine (EOS) ceramides to produce an epoxy-ketone derivative, a crucial step in the conjugation of omega-hydroxyceramide to membrane proteins. Therefore plays a crucial role in the synthesis of corneocytes lipid envelope and the establishment of the skin barrier to water loss. May also play a role in the regulation of the expression of airway mucins. This chain is Arachidonate 12-lipoxygenase, 12R-type, found in Rattus norvegicus (Rat).